The following is a 396-amino-acid chain: Elongation factor Tu (396 aa).

Positions 10–205 (KPHVNIGTIG…ACDDNIPDPV (196 aa)) constitute a tr-type G domain. A G1 region spans residues 19-26 (GHVDHGKT). 19–26 (GHVDHGKT) lines the GTP pocket. Residue T26 coordinates Mg(2+). The tract at residues 62–66 (GITIN) is G2. Residues 83 to 86 (DAPG) are G3. Residues 83–87 (DAPGH) and 138–141 (NKCD) each bind GTP. The tract at residues 138-141 (NKCD) is G4. Positions 175–177 (SAL) are G5.

The protein belongs to the TRAFAC class translation factor GTPase superfamily. Classic translation factor GTPase family. EF-Tu/EF-1A subfamily. As to quaternary structure, monomer.

Its subcellular location is the cytoplasm. The catalysed reaction is GTP + H2O = GDP + phosphate + H(+). In terms of biological role, GTP hydrolase that promotes the GTP-dependent binding of aminoacyl-tRNA to the A-site of ribosomes during protein biosynthesis. The protein is Elongation factor Tu of Corynebacterium glutamicum (strain ATCC 13032 / DSM 20300 / JCM 1318 / BCRC 11384 / CCUG 27702 / LMG 3730 / NBRC 12168 / NCIMB 10025 / NRRL B-2784 / 534).